We begin with the raw amino-acid sequence, 716 residues long: Epidermal growth factor receptor kinase substrate 8-like protein 1 (716 aa).

Positions 35 to 164 constitute a PTB domain; sequence QYHVNHLVTF…LQNYRSGRGE (130 aa). 5 disordered regions span residues 175 to 194, 203 to 249, 404 to 472, 528 to 582, and 600 to 628; these read EELRRGASPAAETPPLQRRP, VEPS…GPEL, PGVE…ETES, YNIL…SLDP, and SRLAQGRSGPSRVTPGPRAQEPQLSPRSE. The residue at position 182 (Ser182) is a Phosphoserine. Thr187 is modified (phosphothreonine). Residues 435–446 are compositionally biased toward basic and acidic residues; the sequence is PWEDPVEKQLQH. Over residues 453–464 the composition is skewed to polar residues; sequence QSAPQVAVNGQQ. In terms of domain architecture, SH3 spans 477–536; sequence KARKWVLCNYDFQARNGSELSVKHRDVLEVLDDRRKWWKVRDHQGQEGYVPYNILTPHPG. The span at 553-563 shows a compositional bias: pro residues; sequence TPPPPPAPAPA. Residues 682 to 713 are a coiled coil; sequence VQRALLEDREKVSELEAVMEKQKKKVEGETKT.

This sequence belongs to the EPS8 family. In terms of assembly, interacts with ABI1. Part of a complex that contains SOS1, ABI1 and EPS8L2. Associates with F-actin. Detected in placenta, skin, mammary gland, bone marrow and stomach.

It localises to the cytoplasm. Its function is as follows. Stimulates guanine exchange activity of SOS1. May play a role in membrane ruffling and remodeling of the actin cytoskeleton. This Mus musculus (Mouse) protein is Epidermal growth factor receptor kinase substrate 8-like protein 1 (Eps8l1).